A 319-amino-acid chain; its full sequence is Ribonuclease Z (319 aa).

Histidine 62, histidine 64, aspartate 66, histidine 67, histidine 145, aspartate 216, and histidine 274 together coordinate Zn(2+). Residue aspartate 66 is the Proton acceptor of the active site.

This sequence belongs to the RNase Z family. In terms of assembly, homodimer. Zn(2+) is required as a cofactor.

It catalyses the reaction Endonucleolytic cleavage of RNA, removing extra 3' nucleotides from tRNA precursor, generating 3' termini of tRNAs. A 3'-hydroxy group is left at the tRNA terminus and a 5'-phosphoryl group is left at the trailer molecule.. Functionally, zinc phosphodiesterase, which displays some tRNA 3'-processing endonuclease activity. Probably involved in tRNA maturation, by removing a 3'-trailer from precursor tRNA. The protein is Ribonuclease Z of Synechococcus sp. (strain CC9605).